The sequence spans 143 residues: Large ribosomal subunit protein uL15 (143 aa).

Residues 1–54 (MQLNSIKPAPGAKHPKRRVGRGIGSGLGKTAGRGHKGQKSRAGGFHKVGFEGGQ) are disordered. Gly residues predominate over residues 21–31 (RGIGSGLGKTA).

Belongs to the universal ribosomal protein uL15 family. Part of the 50S ribosomal subunit.

In terms of biological role, binds to the 23S rRNA. The sequence is that of Large ribosomal subunit protein uL15 from Nitrosospira multiformis (strain ATCC 25196 / NCIMB 11849 / C 71).